The following is a 299-amino-acid chain: ATP phosphoribosyltransferase (299 aa).

Belongs to the ATP phosphoribosyltransferase family. Long subfamily. As to quaternary structure, equilibrium between an active dimeric form, an inactive hexameric form and higher aggregates. Interconversion between the various forms is largely reversible and is influenced by the natural substrates and inhibitors of the enzyme. The cofactor is Mg(2+).

The protein resides in the cytoplasm. It catalyses the reaction 1-(5-phospho-beta-D-ribosyl)-ATP + diphosphate = 5-phospho-alpha-D-ribose 1-diphosphate + ATP. It functions in the pathway amino-acid biosynthesis; L-histidine biosynthesis; L-histidine from 5-phospho-alpha-D-ribose 1-diphosphate: step 1/9. With respect to regulation, feedback inhibited by histidine. In terms of biological role, catalyzes the condensation of ATP and 5-phosphoribose 1-diphosphate to form N'-(5'-phosphoribosyl)-ATP (PR-ATP). Has a crucial role in the pathway because the rate of histidine biosynthesis seems to be controlled primarily by regulation of HisG enzymatic activity. The polypeptide is ATP phosphoribosyltransferase (Shigella flexneri serotype 5b (strain 8401)).